Consider the following 267-residue polypeptide: Eukaryotic translation initiation factor 3 subunit J (267 aa).

Disordered regions lie at residues 1–118 and 221–241; these read MAPS…DLKH and MREERAADKGNKKTKAAKTKV. Positions 28–46 are enriched in acidic residues; sequence DEEEEDVLDSWDAAEDSEV. A coiled-coil region spans residues 44–99; sequence SEVEREKAAKAAAAAAKAEAEAAAKKKSKAQRIEERKQERKKLAEANESDEDSEED. Positions 74-88 are enriched in basic and acidic residues; sequence QRIEERKQERKKLAE. Over residues 90–100 the composition is skewed to acidic residues; the sequence is NESDEDSEEDE. Basic and acidic residues-rich tracts occupy residues 108 to 118 and 221 to 231; these read RRTEKEGDLKH and MREERAADKGN.

This sequence belongs to the eIF-3 subunit J family. As to quaternary structure, component of the eukaryotic translation initiation factor 3 (eIF-3) complex.

It localises to the cytoplasm. Functionally, component of the eukaryotic translation initiation factor 3 (eIF-3) complex, which is involved in protein synthesis of a specialized repertoire of mRNAs and, together with other initiation factors, stimulates binding of mRNA and methionyl-tRNAi to the 40S ribosome. The eIF-3 complex specifically targets and initiates translation of a subset of mRNAs involved in cell proliferation. This is Eukaryotic translation initiation factor 3 subunit J (hcr1) from Aspergillus fumigatus (strain CBS 144.89 / FGSC A1163 / CEA10) (Neosartorya fumigata).